The sequence spans 101 residues: Anti-lipopolysaccharide factor (101 aa).

The cysteines at positions 31 and 52 are disulfide-linked.

Binds tightly to LPS and thus specifically inhibits the LPS-mediated activation of the hemolymph coagulation. It has a strong antibacterial effect especially on the growth of Gram-negative bacteria. In Limulus polyphemus (Atlantic horseshoe crab), this protein is Anti-lipopolysaccharide factor.